A 215-amino-acid chain; its full sequence is NADH-quinone oxidoreductase subunit C (215 aa).

Belongs to the complex I 30 kDa subunit family. As to quaternary structure, NDH-1 is composed of 14 different subunits. Subunits NuoB, C, D, E, F, and G constitute the peripheral sector of the complex.

The protein resides in the cell inner membrane. It carries out the reaction a quinone + NADH + 5 H(+)(in) = a quinol + NAD(+) + 4 H(+)(out). NDH-1 shuttles electrons from NADH, via FMN and iron-sulfur (Fe-S) centers, to quinones in the respiratory chain. The immediate electron acceptor for the enzyme in this species is believed to be ubiquinone. Couples the redox reaction to proton translocation (for every two electrons transferred, four hydrogen ions are translocated across the cytoplasmic membrane), and thus conserves the redox energy in a proton gradient. This is NADH-quinone oxidoreductase subunit C from Bordetella parapertussis (strain 12822 / ATCC BAA-587 / NCTC 13253).